The sequence spans 157 residues: Endoribonuclease YbeY (157 aa).

Zn(2+)-binding residues include histidine 122, histidine 126, and histidine 132.

This sequence belongs to the endoribonuclease YbeY family. Zn(2+) is required as a cofactor.

It is found in the cytoplasm. Its function is as follows. Single strand-specific metallo-endoribonuclease involved in late-stage 70S ribosome quality control and in maturation of the 3' terminus of the 16S rRNA. The protein is Endoribonuclease YbeY of Bacillus subtilis (strain 168).